We begin with the raw amino-acid sequence, 216 residues long: Probable GTP-binding protein EngB (216 aa).

One can recognise an EngB-type G domain in the interval 37–214 (GSVEIAFAGR…RAAMIRLLDE (178 aa)). GTP is bound by residues 45 to 52 (GRSNVGKS), 72 to 76 (GRTQE), 92 to 95 (DMPG), 159 to 162 (TKAD), and 193 to 195 (TSS). Mg(2+) contacts are provided by Ser-52 and Thr-74.

This sequence belongs to the TRAFAC class TrmE-Era-EngA-EngB-Septin-like GTPase superfamily. EngB GTPase family. Mg(2+) serves as cofactor.

Its function is as follows. Necessary for normal cell division and for the maintenance of normal septation. The chain is Probable GTP-binding protein EngB from Rhodopseudomonas palustris (strain TIE-1).